The primary structure comprises 279 residues: Urease accessory protein UreD (279 aa).

The protein belongs to the UreD family. In terms of assembly, ureD, UreF and UreG form a complex that acts as a GTP-hydrolysis-dependent molecular chaperone, activating the urease apoprotein by helping to assemble the nickel containing metallocenter of UreC. The UreE protein probably delivers the nickel.

It is found in the cytoplasm. Functionally, required for maturation of urease via the functional incorporation of the urease nickel metallocenter. The polypeptide is Urease accessory protein UreD (Brucella suis (strain ATCC 23445 / NCTC 10510)).